The sequence spans 281 residues: MGLQAGTRQLHGNLILLPVAVVMLLLCTSPVCATASVGLPADCSRLTSSSPSGVYVIQPAQSPPRVVWCDMDTEGKGWTVVQRNTYSTEITWKESWTTYKYGFGNVQGDHWLGTEYLHLLTQQGTYKVRFVVRDKANVTHYAEYDIFRVESESSGYPLRLGRLLSSGKDYLTSYYSSYGGIHDNMKFSTVDKDQDQHSGNCASSYGGWWYDRCQNVLLNGKKYILWPEICPRVTACRPSSWSNPPMCADCARGWGSATIPSRSPSLPSPITATHTVRNQLQ.

Residues 1 to 33 (MGLQAGTRQLHGNLILLPVAVVMLLLCTSPVCA) form the signal peptide. The Fibrinogen C-terminal domain maps to 34–246 (TASVGLPADC…RPSSWSNPPM (213 aa)). 2 disulfides stabilise this stretch: cysteine 43–cysteine 69 and cysteine 201–cysteine 213. Over residues 260–269 (PSRSPSLPSP) the composition is skewed to low complexity. Positions 260–281 (PSRSPSLPSPITATHTVRNQLQ) are disordered. The span at 270–281 (ITATHTVRNQLQ) shows a compositional bias: polar residues.

In terms of tissue distribution, expressed in smal intestine, colon and lung.

Functionally, shows a cytidine deaminase activity on 2'-deoxycytidine (in vitro), however shows no RNA editing activity (in vitro). In Gallus gallus (Chicken), this protein is Fibrinogen-like protein 1-like protein.